The primary structure comprises 347 residues: Vitellogenin-3 (347 aa).

The N-terminal stretch at 1–15 (MRGFILALVLALVGA) is a signal peptide. An N-linked (GlcNAc...) asparagine glycan is attached at asparagine 80. Residues 104-118 (PSATPLSSSSSTDSS) are compositionally biased toward low complexity. Disordered stretches follow at residues 104–174 (PSAT…DKHC) and 200–234 (QDPRRKVQNSSISSSSSSSSDEGISTPVSQPMFLG). A compositionally biased stretch (basic and acidic residues) spans 124–133 (PGNKRDKDEI). The span at 144 to 163 (SSSSSSSSSTGSGSSKTCSS) shows a compositional bias: low complexity. Basic and acidic residues predominate over residues 164–174 (SREDSSRDKHC). An N-linked (GlcNAc...) asparagine glycan is attached at asparagine 208. A compositionally biased stretch (low complexity) spans 209 to 219 (SSISSSSSSSS).

In terms of processing, phosvitin, an egg yolk storage protein, is one of the most highly phosphorylated (10%) proteins in nature. Post-translationally, cathepsin D is responsible for intraoocytic processing of vitellogenin. May contain intrachain disulfide bonds. In terms of tissue distribution, produced by the liver, secreted into the blood and then sequestered by receptor mediated endocytosis into growing oocytes, where it is generally cleaved, giving rise to the respective yolk components.

In terms of biological role, precursor of the egg-yolk proteins that are sources of nutrients during early development of oviparous organisms. Functionally, phosvitin is believed to be of importance in sequestering calcium, iron and other cations for the developing embryo. This Gallus gallus (Chicken) protein is Vitellogenin-3 (VTG3).